The primary structure comprises 156 residues: MIQSQINRNIRLDLADAILLSKAKKDLSFAEIADGTGLAEAFVTAALLGQQALPADAARLVGAKLDLDEDAILLLQMIPLRGCIDDRIPTDPTMYRFYEMLQVYGTTLKALVHEKFGDGIISAINFKLDVKKVADPEGGERAVITLDGKYLPTKPF.

Residues R96, E99, and S122 contribute to the active site.

The protein belongs to the cyanase family.

The catalysed reaction is cyanate + hydrogencarbonate + 3 H(+) = NH4(+) + 2 CO2. Functionally, catalyzes the reaction of cyanate with bicarbonate to produce ammonia and carbon dioxide. In Escherichia coli O7:K1 (strain IAI39 / ExPEC), this protein is Cyanate hydratase.